The chain runs to 356 residues: NADH-quinone oxidoreductase subunit H (356 aa).

Transmembrane regions (helical) follow at residues 22–42, 59–79, 93–113, 124–144, 171–191, 198–218, 240–260, 285–305, and 321–341; these read GVVSIKVIALIICLLLATAYL, PSLAGPFGLLQPIADAIKLVF, FIIAPIITFVLSLLGWSVIPI, IGGILFILAVTSLGVYGIIIA, MALSIVAVLIVTGEMDLIQIV, PIWLTIMMLPLAVIYFISILA, VEYSSMAFAMFFLGEYANMIL, IPGYIWFILKVSMVLFCFLWI, and GLKVFLPIVLAWIIVVSTILV.

It belongs to the complex I subunit 1 family. NDH-1 is composed of 14 different subunits. Subunits NuoA, H, J, K, L, M, N constitute the membrane sector of the complex.

It localises to the cell inner membrane. The catalysed reaction is a quinone + NADH + 5 H(+)(in) = a quinol + NAD(+) + 4 H(+)(out). In terms of biological role, NDH-1 shuttles electrons from NADH, via FMN and iron-sulfur (Fe-S) centers, to quinones in the respiratory chain. The immediate electron acceptor for the enzyme in this species is believed to be ubiquinone. Couples the redox reaction to proton translocation (for every two electrons transferred, four hydrogen ions are translocated across the cytoplasmic membrane), and thus conserves the redox energy in a proton gradient. This subunit may bind ubiquinone. The chain is NADH-quinone oxidoreductase subunit H from Orientia tsutsugamushi (strain Boryong) (Rickettsia tsutsugamushi).